The sequence spans 530 residues: MNSYIYKEEDWEIVETLKSNVFKVNNKNNIVLNGNSFKTCILKIIINKDKNVWKEGQVLEKLKNIDSIVKCYGWCCNKHTTYIFIEYINGYTLEEYVLKNHPIPEKELSEIIEDLIKSLASIHEIGVIHRDLKLENVMFDKESNKWKLIDFGLSFSFSPSNDGSKCYTQCGSIGYIPPEIKLGGQCGRKSDIWIFGCLVIKMLGGELEETEIQIDGASFNNNNNKPNIWIPKIPPHASKFLQNFIQKCFFEEEVLRFDSITLIDHPFLSLFKSKGNMLYLIQRGHKRWMDITQKKKGIKIEGKTFTFEDNDNKEPFGPGIVPDGTVELIFKKTFNQRLIPGSIPSTVQILDFGVDGDSFFNQEMDDDLFLDCDLKSLTLGNAFTHTLPYFGSLCYLSLGRNRNALQNLPPTLETLKYYGEVQTDLNIKSIPHVKNLLIPFNNHSIIIDTIPPTVKYLAWGKLKDLEAIETLKNLPPSVNDLTFSCPPDVFDKIQRKHIPDSISIIIINQHVIELKNSDNSETYLKDNIVC.

Positions 11–268 (WEIVETLKSN…SITLIDHPFL (258 aa)) constitute a Protein kinase domain. ATP-binding positions include 17–25 (LKSNVFKVN) and Lys43. The active-site Proton acceptor is the Asp131.

It belongs to the protein kinase superfamily. STE Ser/Thr protein kinase family. Mg(2+) is required as a cofactor.

It carries out the reaction L-seryl-[protein] + ATP = O-phospho-L-seryl-[protein] + ADP + H(+). The enzyme catalyses L-threonyl-[protein] + ATP = O-phospho-L-threonyl-[protein] + ADP + H(+). The chain is Probable serine/threonine-protein kinase fnkB from Dictyostelium discoideum (Social amoeba).